A 107-amino-acid chain; its full sequence is Probable insulin-like peptide beta-type 3 (107 aa).

Positions 1–19 (MKLSVVLALFIIFQLGAAS) are cleaved as a signal peptide. The propeptide occupies 20–55 (LMRNWMFDFEKELEHDYDDSEIGFHNIHSLMARSRR). 4 disulfide bridges follow: Cys-62–Cys-90, Cys-74–Cys-103, Cys-78–Cys-104, and Cys-89–Cys-94.

This sequence belongs to the insulin family.

The protein resides in the secreted. The sequence is that of Probable insulin-like peptide beta-type 3 (ins-3) from Caenorhabditis elegans.